The sequence spans 310 residues: MPLKVVFMGTPDFAVPTLAEIVGSGHEVVAVYTRAPAPAGRGMALRPSPVQALAERFGLPVRTPATLRSEEAVEIFRGHDADVAVVVAYGMILPPAILDAPRLGCLNLHASILPRWRGAAPIQRAVMAGDSETGVAVMRMEPGLDTGPVAMLERVAITPEMTAGELHDRLMPLGADLMNRALGALERGGLTFTPQAAEGIVYAHKITNEEARLDWAEPAQRLHDTIRGLSPFPGAFFMADLGRGPERVKVLRASLADGRAEPGTLLDAHGTVACGEGAIRLLRVQPAGKGPMEAGDFLRGRRLEPGARLA.

111–114 is a binding site for (6S)-5,6,7,8-tetrahydrofolate; it reads SILP.

Belongs to the Fmt family.

It catalyses the reaction L-methionyl-tRNA(fMet) + (6R)-10-formyltetrahydrofolate = N-formyl-L-methionyl-tRNA(fMet) + (6S)-5,6,7,8-tetrahydrofolate + H(+). Its function is as follows. Attaches a formyl group to the free amino group of methionyl-tRNA(fMet). The formyl group appears to play a dual role in the initiator identity of N-formylmethionyl-tRNA by promoting its recognition by IF2 and preventing the misappropriation of this tRNA by the elongation apparatus. The chain is Methionyl-tRNA formyltransferase from Methylobacterium nodulans (strain LMG 21967 / CNCM I-2342 / ORS 2060).